We begin with the raw amino-acid sequence, 362 residues long: Cobalt-precorrin-5B C(1)-methyltransferase (362 aa).

Belongs to the CbiD family.

It catalyses the reaction Co-precorrin-5B + S-adenosyl-L-methionine = Co-precorrin-6A + S-adenosyl-L-homocysteine. It functions in the pathway cofactor biosynthesis; adenosylcobalamin biosynthesis; cob(II)yrinate a,c-diamide from sirohydrochlorin (anaerobic route): step 6/10. Catalyzes the methylation of C-1 in cobalt-precorrin-5B to form cobalt-precorrin-6A. The chain is Cobalt-precorrin-5B C(1)-methyltransferase from Synechococcus sp. (strain CC9902).